The chain runs to 409 residues: Argininosuccinate synthase (409 aa).

ATP-binding positions include 16-24 and Ala44; that span reads AYSGGLDTS. Residues Tyr96 and Ser101 each contribute to the L-citrulline site. Residue Gly126 coordinates ATP. L-aspartate-binding residues include Thr128, Asn132, and Asp133. Asn132 provides a ligand contact to L-citrulline. L-citrulline-binding residues include Arg136, Ser185, Ser194, Glu270, and Tyr282.

The protein belongs to the argininosuccinate synthase family. Type 1 subfamily. As to quaternary structure, homotetramer.

It localises to the cytoplasm. It catalyses the reaction L-citrulline + L-aspartate + ATP = 2-(N(omega)-L-arginino)succinate + AMP + diphosphate + H(+). It functions in the pathway amino-acid biosynthesis; L-arginine biosynthesis; L-arginine from L-ornithine and carbamoyl phosphate: step 2/3. This is Argininosuccinate synthase from Shewanella piezotolerans (strain WP3 / JCM 13877).